A 570-amino-acid polypeptide reads, in one-letter code: Urease subunit alpha 1 (570 aa).

Positions 131-570 (GGIDTHVHFI…VPMAQRYFLF (440 aa)) constitute a Urease domain. Ni(2+)-binding residues include histidine 136, histidine 138, and lysine 219. The residue at position 219 (lysine 219) is an N6-carboxylysine. Histidine 221 provides a ligand contact to substrate. Ni(2+) is bound by residues histidine 248 and histidine 274. Histidine 322 acts as the Proton donor in catalysis. A Ni(2+)-binding site is contributed by aspartate 362.

The protein belongs to the metallo-dependent hydrolases superfamily. Urease alpha subunit family. In terms of assembly, heterotrimer of UreA (gamma), UreB (beta) and UreC (alpha) subunits. Three heterotrimers associate to form the active enzyme. Requires Ni cation as cofactor. In terms of processing, carboxylation allows a single lysine to coordinate two nickel ions.

The protein resides in the cytoplasm. The catalysed reaction is urea + 2 H2O + H(+) = hydrogencarbonate + 2 NH4(+). Its pathway is nitrogen metabolism; urea degradation; CO(2) and NH(3) from urea (urease route): step 1/1. Its function is as follows. Disrupting the ure1 operon causes loss of urease activity, decreased resistance to low pH killing in vitro and decreased pathogen survival when inoculated in BALB/c mice by gavage. This Brucella suis biovar 1 (strain 1330) protein is Urease subunit alpha 1.